Reading from the N-terminus, the 250-residue chain is L-cystine transport system ATP-binding protein TcyN (250 aa).

Positions 4–244 (IEVKNLVKKF…PEQPRTRQFL (241 aa)) constitute an ABC transporter domain. 36 to 43 (GPSGSGKT) serves as a coordination point for ATP.

It belongs to the ABC transporter superfamily. The complex is composed of two ATP-binding proteins (TcyN), two transmembrane proteins (TcyL) and a solute-binding protein (TcyJ).

It localises to the cell inner membrane. It catalyses the reaction L-cystine(out) + ATP + H2O = L-cystine(in) + ADP + phosphate + H(+). The catalysed reaction is D-cystine(out) + ATP + H2O = D-cystine(in) + ADP + phosphate + H(+). With respect to regulation, the TcyJLN system is inhibited by L-cystine, L-cysteine, DL-2,6-diaminopimelic acid and L-cystathionine, and is stimulated by D-cysteine. Part of the ABC transporter complex TcyJLN involved in L-cystine import. This high affinity cystine transporter is involved in resistance to oxidative stress by forming a L-cysteine/L-cystine shuttle system with the EamA transporter, which exports L-cysteine as reducing equivalents to the periplasm to prevent the cells from oxidative stress. Exported L-cysteine can reduce the periplasmic hydrogen peroxide to water, and then generated L-cystine is imported back into the cytoplasm via the TcyJLN complex. Functions at low cystine concentrations. The system can also transport L-cysteine, diaminopimelic acid (DAP), djenkolate, lanthionine, D-cystine, homocystine, and it mediates accumulation of the toxic compounds L-selenaproline (SCA) and L-selenocystine (SeCys). Could also facilitate threonine efflux. Responsible for energy coupling to the transport system. The protein is L-cystine transport system ATP-binding protein TcyN of Escherichia coli (strain K12).